The chain runs to 423 residues: 3-phosphoshikimate 1-carboxyvinyltransferase (423 aa).

Residues Lys-19, Ser-20, and Arg-24 each contribute to the 3-phosphoshikimate site. Lys-19 lines the phosphoenolpyruvate pocket. Phosphoenolpyruvate-binding residues include Gly-89 and Arg-118. Positions 164, 165, 166, 192, 304, and 331 each coordinate 3-phosphoshikimate. Gln-166 contributes to the phosphoenolpyruvate binding site. Catalysis depends on Asp-304, which acts as the Proton acceptor. Phosphoenolpyruvate-binding residues include Arg-335 and Arg-377.

Belongs to the EPSP synthase family. As to quaternary structure, monomer.

The protein resides in the cytoplasm. It catalyses the reaction 3-phosphoshikimate + phosphoenolpyruvate = 5-O-(1-carboxyvinyl)-3-phosphoshikimate + phosphate. The protein operates within metabolic intermediate biosynthesis; chorismate biosynthesis. Functionally, catalyzes the transfer of the enolpyruvyl moiety of phosphoenolpyruvate (PEP) to the 5-hydroxyl of shikimate-3-phosphate (S3P) to produce enolpyruvyl shikimate-3-phosphate and inorganic phosphate. In Korarchaeum cryptofilum (strain OPF8), this protein is 3-phosphoshikimate 1-carboxyvinyltransferase.